The following is a 156-amino-acid chain: Putative pre-16S rRNA nuclease (156 aa).

This sequence belongs to the YqgF nuclease family.

Its subcellular location is the cytoplasm. In terms of biological role, could be a nuclease involved in processing of the 5'-end of pre-16S rRNA. This chain is Putative pre-16S rRNA nuclease, found in Albidiferax ferrireducens (strain ATCC BAA-621 / DSM 15236 / T118) (Rhodoferax ferrireducens).